The following is a 178-amino-acid chain: Bifunctional protein PyrR (178 aa).

Substrate-binding positions include 41–42 (RR), 103–111 (DDVLYTGRT), and R136. The PRPP-binding motif lies at 99–111 (VILVDDVLYTGRT).

This sequence belongs to the purine/pyrimidine phosphoribosyltransferase family. PyrR subfamily. In terms of assembly, homodimer and homohexamer; in equilibrium.

It carries out the reaction UMP + diphosphate = 5-phospho-alpha-D-ribose 1-diphosphate + uracil. Its function is as follows. Regulates transcriptional attenuation of the pyrimidine nucleotide (pyr) operon by binding in a uridine-dependent manner to specific sites on pyr mRNA. This disrupts an antiterminator hairpin in the RNA and favors formation of a downstream transcription terminator, leading to a reduced expression of downstream genes. Functionally, also displays a weak uracil phosphoribosyltransferase activity which is not physiologically significant. This is Bifunctional protein PyrR from Clostridium acetobutylicum (strain ATCC 824 / DSM 792 / JCM 1419 / IAM 19013 / LMG 5710 / NBRC 13948 / NRRL B-527 / VKM B-1787 / 2291 / W).